The sequence spans 181 residues: Acireductone dioxygenase (181 aa).

Positions 97, 99, 103, and 141 each coordinate Fe(2+). Ni(2+) is bound by residues H97, H99, E103, and H141.

This sequence belongs to the acireductone dioxygenase (ARD) family. Monomer. The cofactor is Fe(2+). Ni(2+) is required as a cofactor.

It carries out the reaction 1,2-dihydroxy-5-(methylsulfanyl)pent-1-en-3-one + O2 = 3-(methylsulfanyl)propanoate + CO + formate + 2 H(+). It catalyses the reaction 1,2-dihydroxy-5-(methylsulfanyl)pent-1-en-3-one + O2 = 4-methylsulfanyl-2-oxobutanoate + formate + 2 H(+). The protein operates within amino-acid biosynthesis; L-methionine biosynthesis via salvage pathway; L-methionine from S-methyl-5-thio-alpha-D-ribose 1-phosphate: step 5/6. In terms of biological role, catalyzes 2 different reactions between oxygen and the acireductone 1,2-dihydroxy-3-keto-5-methylthiopentene (DHK-MTPene) depending upon the metal bound in the active site. Fe-containing acireductone dioxygenase (Fe-ARD) produces formate and 2-keto-4-methylthiobutyrate (KMTB), the alpha-ketoacid precursor of methionine in the methionine recycle pathway. Ni-containing acireductone dioxygenase (Ni-ARD) produces methylthiopropionate, carbon monoxide and formate, and does not lie on the methionine recycle pathway. The sequence is that of Acireductone dioxygenase from Pseudomonas fluorescens (strain Pf0-1).